The sequence spans 466 residues: Asparagine--tRNA ligase (466 aa).

The protein belongs to the class-II aminoacyl-tRNA synthetase family. In terms of assembly, homodimer.

It is found in the cytoplasm. It carries out the reaction tRNA(Asn) + L-asparagine + ATP = L-asparaginyl-tRNA(Asn) + AMP + diphosphate + H(+). The chain is Asparagine--tRNA ligase from Vibrio vulnificus (strain YJ016).